We begin with the raw amino-acid sequence, 447 residues long: M-phase inducer phosphatase 3 (447 aa).

Serine 2 bears the N-acetylserine mark. Residues serine 20, serine 38, serine 56, serine 60, and serine 63 each carry the phosphoserine modification. Threonine 66 carries the post-translational modification Phosphothreonine; by CDK1. Residues 81 to 90 (MSASPLTTSA) are compositionally biased toward polar residues. A disordered region spans residues 81–109 (MSASPLTTSADLEDNGSLDSSGPLDRQLT). Serine 128 bears the Phosphoserine mark. Threonine 129 bears the Phosphothreonine mark. At serine 192 the chain carries Phosphoserine; by CDK1. Serine 213 and serine 220 each carry phosphoserine; by PLK3. Residues 294–401 (VIERFYIIDC…FFPEYMELCD (108 aa)) form the Rhodanese domain. Cysteine 350 is an active-site residue. Serine 445 carries the phosphoserine modification.

This sequence belongs to the MPI phosphatase family. As to quaternary structure, interacts with MAPK14 and 14-3-3 proteins. When phosphorylated on Ser-128 and/or Thr-129, interacts with PLK1. Interacts with MARK3/C-TAK1. Phosphorylated by PLK4. Phosphorylated by PLK1, leading to activate the phosphatase activity. Phosphorylated by CHEK1 and MAPKAPK2. This phosphorylation creates a binding site for 14-3-3 protein and inhibits the phosphatase activity. Phosphorylation by PLK3 at Ser-213 promotes nuclear translocation. Ser-220 is a minor phosphorylation site. Phosphorylation by CDK1 occurs at G2 and G2-M transition and leads to increased activity. Spleen and thymus.

Its subcellular location is the nucleus. It catalyses the reaction O-phospho-L-tyrosyl-[protein] + H2O = L-tyrosyl-[protein] + phosphate. In terms of biological role, functions as a dosage-dependent inducer in mitotic control. Tyrosine protein phosphatase required for progression of the cell cycle. When phosphorylated, highly effective in activating G2 cells into prophase. Directly dephosphorylates CDK1 and activates its kinase activity. The polypeptide is M-phase inducer phosphatase 3 (Cdc25c) (Mus musculus (Mouse)).